A 729-amino-acid polypeptide reads, in one-letter code: Fatty acid oxidation complex subunit alpha (729 aa).

The tract at residues 1-189 (MLYKGDTLYL…KIGLVDGVVK (189 aa)) is enoyl-CoA hydratase/isomerase. Aspartate 296 contributes to the substrate binding site. The interval 311–729 (ETPKQAAVLG…ARPVGSLKTA (419 aa)) is 3-hydroxyacyl-CoA dehydrogenase. Residues methionine 324, aspartate 343, 400–402 (VVE), lysine 407, and serine 429 each bind NAD(+). Histidine 450 (for 3-hydroxyacyl-CoA dehydrogenase activity) is an active-site residue. Asparagine 453 lines the NAD(+) pocket. Substrate is bound by residues asparagine 500 and tyrosine 660. Positions 708-729 (RHNEPYYPPVEPARPVGSLKTA) are disordered.

In the N-terminal section; belongs to the enoyl-CoA hydratase/isomerase family. It in the C-terminal section; belongs to the 3-hydroxyacyl-CoA dehydrogenase family. As to quaternary structure, heterotetramer of two alpha chains (FadB) and two beta chains (FadA).

It catalyses the reaction a (3S)-3-hydroxyacyl-CoA + NAD(+) = a 3-oxoacyl-CoA + NADH + H(+). The catalysed reaction is a (3S)-3-hydroxyacyl-CoA = a (2E)-enoyl-CoA + H2O. The enzyme catalyses a 4-saturated-(3S)-3-hydroxyacyl-CoA = a (3E)-enoyl-CoA + H2O. It carries out the reaction (3S)-3-hydroxybutanoyl-CoA = (3R)-3-hydroxybutanoyl-CoA. It catalyses the reaction a (3Z)-enoyl-CoA = a 4-saturated (2E)-enoyl-CoA. The catalysed reaction is a (3E)-enoyl-CoA = a 4-saturated (2E)-enoyl-CoA. Its pathway is lipid metabolism; fatty acid beta-oxidation. Involved in the aerobic and anaerobic degradation of long-chain fatty acids via beta-oxidation cycle. Catalyzes the formation of 3-oxoacyl-CoA from enoyl-CoA via L-3-hydroxyacyl-CoA. It can also use D-3-hydroxyacyl-CoA and cis-3-enoyl-CoA as substrate. The chain is Fatty acid oxidation complex subunit alpha from Salmonella typhimurium (strain LT2 / SGSC1412 / ATCC 700720).